The following is a 295-amino-acid chain: 3-hydroxy-5-phosphonooxypentane-2,4-dione thiolase (295 aa).

The active-site Schiff-base intermediate with substrate is the Lys203.

Belongs to the DeoC/FbaB aldolase family. In terms of assembly, homodecamer.

The protein localises to the cytoplasm. The enzyme catalyses dihydroxyacetone phosphate + acetyl-CoA = 3-hydroxy-2,4-dioxopentyl phosphate + CoA. In terms of biological role, involved in the degradation of phospho-AI-2, thereby terminating induction of the lsr operon and closing the AI-2 signaling cycle. Catalyzes the transfer of an acetyl moiety from 3-hydroxy-5-phosphonooxypentane-2,4-dione to CoA to form glycerone phosphate and acetyl-CoA. The protein is 3-hydroxy-5-phosphonooxypentane-2,4-dione thiolase of Klebsiella pneumoniae subsp. pneumoniae (strain ATCC 700721 / MGH 78578).